The sequence spans 692 residues: DNA ligase (692 aa).

NAD(+)-binding positions include 35–39 (DLVYD), 88–89 (SL), and Glu117. Lys119 functions as the N6-AMP-lysine intermediate in the catalytic mechanism. Positions 140, 176, 301, and 325 each coordinate NAD(+). The Zn(2+) site is built by Cys416, Cys419, Cys434, and Cys439. The 82-residue stretch at 611–692 (LTNQSNSWAS…FDLIKNSKKT (82 aa)) folds into the BRCT domain.

This sequence belongs to the NAD-dependent DNA ligase family. LigA subfamily. It depends on Mg(2+) as a cofactor. Requires Mn(2+) as cofactor.

It catalyses the reaction NAD(+) + (deoxyribonucleotide)n-3'-hydroxyl + 5'-phospho-(deoxyribonucleotide)m = (deoxyribonucleotide)n+m + AMP + beta-nicotinamide D-nucleotide.. In terms of biological role, DNA ligase that catalyzes the formation of phosphodiester linkages between 5'-phosphoryl and 3'-hydroxyl groups in double-stranded DNA using NAD as a coenzyme and as the energy source for the reaction. It is essential for DNA replication and repair of damaged DNA. The sequence is that of DNA ligase from Mesomycoplasma hyopneumoniae (strain 7448) (Mycoplasma hyopneumoniae).